Consider the following 328-residue polypeptide: Putative P2Y purinoceptor 10 (328 aa).

The Extracellular portion of the chain corresponds to 1 to 27 (MGSNSTSSAESNCNATYLPFQYSLYAT). Asn-4 and Asn-14 each carry an N-linked (GlcNAc...) asparagine glycan. The chain crosses the membrane as a helical span at residues 28 to 48 (TYIFIFIPGLLANSAALWVLC). Residues 49-56 (RFISKKNK) are Cytoplasmic-facing. Residues 57–77 (AIIFMINLSVADLAHILSLPL) traverse the membrane as a helical segment. At 78–91 (RIYYYINRHWPFQR) the chain is on the extracellular side. Residues 92–112 (ALCLLCFYLKYLNMYASIFFL) form a helical membrane-spanning segment. A disulfide bridge connects residues Cys-94 and Cys-170. Over 113–137 (TCISLQRCLFLLKPFRARNWKRRYD) the chain is Cytoplasmic. Residues 138 to 158 (VGISAVIWIVVGTACLPFPIL) form a helical membrane-spanning segment. Over 159 to 182 (RNAGLANSTDSCFADLGYKQMDAV) the chain is Extracellular. Residues 183–203 (VLVTMVVIAELAGFVIPVITI) form a helical membrane-spanning segment. Residues 204 to 233 (ACCTWKTTVSLKHPPIAFQGISERKKALRM) are Cytoplasmic-facing. The chain crosses the membrane as a helical span at residues 234–254 (VFMCAAVFVICFTPYHINFIF). At 255-277 (YTMVKESIITSCPTVKSTLYFHP) the chain is on the extracellular side. Residues 278–298 (FSLCLASLCCLLDPILYYFMA) traverse the membrane as a helical segment. Residues 299-328 (SEFRDQLSRHGSSVTRSRLMSRESGSSMVN) lie on the Cytoplasmic side of the membrane.

Belongs to the G-protein coupled receptor 1 family.

The protein localises to the cell membrane. Putative receptor for purines coupled to G-proteins. This Mus musculus (Mouse) protein is Putative P2Y purinoceptor 10 (P2ry10).